Reading from the N-terminus, the 273-residue chain is METNLQKRKDSRKALRIKVISMGNAEVGKSCIIKRYCEKRFVPKYQATIGIDYGVTKVHIKDREIKVNIFDMAGHPFFYEVRNEFYKDTQGVILVYDVGHKETFESLDGWLAEMKQELGPQGNIDNIVFAVCANKIDSTKHRSVDESEGRLWSESKGFLYFETSAQSGEGINEMFQAFYSAIVDLCDNGGKRPVSAINIGFTKEQADSIRRIRNCKDSWDMLGVKPGATRDEVNKAYRKLAVLLHPDKCMAPGSEDAFKAVVNARTALLKNIK.

Residues 23–30 (GNAEVGKS), 71–75 (DMAGH), and 134–137 (NKID) each bind GTP. Residues 217-273 (DSWDMLGVKPGATRDEVNKAYRKLAVLLHPDKCMAPGSEDAFKAVVNARTALLKNIK) form the J domain.

Belongs to the small GTPase superfamily. Rab family.

It is found in the nucleus. GTPase possibly involved in regulation of the MEK/ERK pathway. The chain is DnaJ homolog subfamily C member 27-A (dnajc27-a) from Xenopus laevis (African clawed frog).